A 591-amino-acid chain; its full sequence is Aspartate--tRNA(Asp/Asn) ligase (591 aa).

Glu-176 contacts L-aspartate. An aspartate region spans residues 200-203 (QLFK). An L-aspartate-binding site is contributed by Arg-222. ATP-binding positions include 222–224 (RDE) and Gln-231. Position 450 (His-450) interacts with L-aspartate. Glu-484 provides a ligand contact to ATP. Arg-491 contacts L-aspartate. 536–539 (GLDR) provides a ligand contact to ATP.

This sequence belongs to the class-II aminoacyl-tRNA synthetase family. Type 1 subfamily. As to quaternary structure, homodimer.

The protein localises to the cytoplasm. The enzyme catalyses tRNA(Asx) + L-aspartate + ATP = L-aspartyl-tRNA(Asx) + AMP + diphosphate. Functionally, aspartyl-tRNA synthetase with relaxed tRNA specificity since it is able to aspartylate not only its cognate tRNA(Asp) but also tRNA(Asn). Reaction proceeds in two steps: L-aspartate is first activated by ATP to form Asp-AMP and then transferred to the acceptor end of tRNA(Asp/Asn). The chain is Aspartate--tRNA(Asp/Asn) ligase from Bacillus thuringiensis (strain Al Hakam).